Reading from the N-terminus, the 198-residue chain is Synaptobrevin homolog YKT6-B (198 aa).

Positions V8 to L127 constitute a Longin domain. Positions P138–M198 constitute a v-SNARE coiled-coil homology domain. The S-palmitoyl cysteine moiety is linked to residue C194. Position 195 is a cysteine methyl ester (C195). A lipid anchor (S-farnesyl cysteine) is attached at C195. Positions D196–M198 are cleaved as a propeptide — removed in mature form.

Belongs to the synaptobrevin family. In terms of processing, palmitoylated; catalyzes its own palmitoylation. Palmitoylation is required for Golgi targeting. Post-translationally, farnesylation is required for Golgi targeting.

It localises to the cytoplasm. It is found in the cytosol. The protein localises to the cytoplasmic vesicle membrane. Its subcellular location is the golgi apparatus membrane. Vesicular soluble NSF attachment protein receptor (v-SNARE) mediating vesicle docking and fusion to a specific acceptor cellular compartment. Functions in endoplasmic reticulum to Golgi transport; as part of a SNARE complex composed of GOSR1, GOSR2 and STX5. Functions in early/recycling endosome to TGN transport; as part of a SNARE complex composed of BET1L, GOSR1 and STX5. Has a S-palmitoyl transferase activity. The sequence is that of Synaptobrevin homolog YKT6-B (ykt6-b) from Xenopus laevis (African clawed frog).